The chain runs to 116 residues: NADH-quinone oxidoreductase subunit A (116 aa).

3 helical membrane-spanning segments follow: residues 3-23 (FTFLVVVLLTALAFVGVVIAL), 61-81 (FAILFLMFDVETAFLFPWAVV), and 88-108 (QGLVSILFFFIILVLGLAYAW).

This sequence belongs to the complex I subunit 3 family. NDH-1 is composed of 14 different subunits. Subunits NuoA, H, J, K, L, M, N constitute the membrane sector of the complex.

The protein resides in the cell inner membrane. It catalyses the reaction a quinone + NADH + 5 H(+)(in) = a quinol + NAD(+) + 4 H(+)(out). NDH-1 shuttles electrons from NADH, via FMN and iron-sulfur (Fe-S) centers, to quinones in the respiratory chain. The immediate electron acceptor for the enzyme in this species is believed to be a menaquinone. Couples the redox reaction to proton translocation (for every two electrons transferred, four hydrogen ions are translocated across the cytoplasmic membrane), and thus conserves the redox energy in a proton gradient. The chain is NADH-quinone oxidoreductase subunit A from Bacteroides thetaiotaomicron (strain ATCC 29148 / DSM 2079 / JCM 5827 / CCUG 10774 / NCTC 10582 / VPI-5482 / E50).